The following is a 1006-amino-acid chain: Probable beta-galactosidase A (1006 aa).

An N-terminal signal peptide occupies residues 1–18; the sequence is MKLLSVCAIALLAAQAAG. Substrate-binding residues include Tyr96, Asn140, Ala141, and Glu142. An N-linked (GlcNAc...) asparagine glycan is attached at Asn156. A substrate-binding site is contributed by Asn199. Glu200 acts as the Proton donor in catalysis. Cys205 and Cys206 are oxidised to a cystine. Tyr260 is a binding site for substrate. A disulfide bond links Cys266 and Cys315. Residue Glu298 is the Nucleophile of the active site. Tyr364 serves as a coordination point for substrate. N-linked (GlcNAc...) asparagine glycans are attached at residues Asn373, Asn402, Asn422, Asn622, Asn760, Asn777, and Asn914.

This sequence belongs to the glycosyl hydrolase 35 family.

The protein localises to the secreted. It carries out the reaction Hydrolysis of terminal non-reducing beta-D-galactose residues in beta-D-galactosides.. In terms of biological role, cleaves beta-linked terminal galactosyl residues from gangliosides, glycoproteins, and glycosaminoglycans. The sequence is that of Probable beta-galactosidase A (lacA) from Aspergillus fumigatus (strain CBS 144.89 / FGSC A1163 / CEA10) (Neosartorya fumigata).